Reading from the N-terminus, the 643-residue chain is Threonine--tRNA ligase (643 aa).

The 61-residue stretch at Met1–Thr61 folds into the TGS domain. Residues Asp243 to Pro534 are catalytic. Positions 334, 385, and 511 each coordinate Zn(2+).

The protein belongs to the class-II aminoacyl-tRNA synthetase family. Homodimer. Requires Zn(2+) as cofactor.

The protein localises to the cytoplasm. It catalyses the reaction tRNA(Thr) + L-threonine + ATP = L-threonyl-tRNA(Thr) + AMP + diphosphate + H(+). Its function is as follows. Catalyzes the attachment of threonine to tRNA(Thr) in a two-step reaction: L-threonine is first activated by ATP to form Thr-AMP and then transferred to the acceptor end of tRNA(Thr). Also edits incorrectly charged L-seryl-tRNA(Thr). The sequence is that of Threonine--tRNA ligase from Actinobacillus pleuropneumoniae serotype 5b (strain L20).